The chain runs to 111 residues: Nucleoid-associated protein PSEEN1789 (111 aa).

2 disordered regions span residues 1 to 25 (MMKG…KMQE) and 89 to 111 (NSQD…KMPF).

It belongs to the YbaB/EbfC family. As to quaternary structure, homodimer.

The protein localises to the cytoplasm. It localises to the nucleoid. Binds to DNA and alters its conformation. May be involved in regulation of gene expression, nucleoid organization and DNA protection. This Pseudomonas entomophila (strain L48) protein is Nucleoid-associated protein PSEEN1789.